The chain runs to 226 residues: MKLRPHLKIEAKGTGSVSFFSEDWLTAQQARTFARELGRFPYMKELEFEDEKGGSWTLKELEKLTEELAQEPDDITVYFDGSFDKESELAGLGIVIYYSLGGTRHRLRKNKSFRLKTNNEAEYAALYEAIREVRELGASRNSITIKGDSLVVLNQLDGSWPCYDPSHNEWLDKIEALLESLKLTPTYETIQRKDNQEADGLAKKILSHQFVESHTKLDRNGDDDIG.

The 137-residue stretch at 71–207 (EPDDITVYFD…ADGLAKKILS (137 aa)) folds into the RNase H type-1 domain.

This is an uncharacterized protein from Bacillus subtilis (strain 168).